The sequence spans 204 residues: Shikimate kinase (204 aa).

35–40 (ASGKST) lines the ATP pocket. Ser-39 is a binding site for Mg(2+). The substrate site is built by Asp-57, Arg-81, and Gly-103. Position 142 (Arg-142) interacts with ATP. Arg-169 is a substrate binding site.

This sequence belongs to the shikimate kinase family. Monomer. It depends on Mg(2+) as a cofactor.

It localises to the cytoplasm. The enzyme catalyses shikimate + ATP = 3-phosphoshikimate + ADP + H(+). It functions in the pathway metabolic intermediate biosynthesis; chorismate biosynthesis; chorismate from D-erythrose 4-phosphate and phosphoenolpyruvate: step 5/7. Functionally, catalyzes the specific phosphorylation of the 3-hydroxyl group of shikimic acid using ATP as a cosubstrate. This is Shikimate kinase from Salinibacter ruber (strain DSM 13855 / M31).